Reading from the N-terminus, the 633-residue chain is tRNA uridine 5-carboxymethylaminomethyl modification enzyme MnmG (633 aa).

FAD-binding positions include 13-18, valine 125, and serine 180; that span reads GGGHAG. 273–287 contacts NAD(+); sequence GPRYCPSIEDKITRF. Glutamine 370 lines the FAD pocket.

Belongs to the MnmG family. Homodimer. Heterotetramer of two MnmE and two MnmG subunits. FAD serves as cofactor.

The protein resides in the cytoplasm. Functionally, NAD-binding protein involved in the addition of a carboxymethylaminomethyl (cmnm) group at the wobble position (U34) of certain tRNAs, forming tRNA-cmnm(5)s(2)U34. In Alteromonas mediterranea (strain DSM 17117 / CIP 110805 / LMG 28347 / Deep ecotype), this protein is tRNA uridine 5-carboxymethylaminomethyl modification enzyme MnmG.